A 277-amino-acid polypeptide reads, in one-letter code: DNA-binding transcriptional activator MhpR (277 aa).

The region spanning 12 to 74 (VRGLTRGLML…PSDDSFRLTI (63 aa)) is the HTH iclR-type domain. The segment at residues 34-53 (VGLLAELSGLHRTTVRRLLE) is a DNA-binding region (H-T-H motif). The IclR-ED domain occupies 89–262 (ISALAAPLLG…AKQIEEGVES (174 aa)).

In terms of biological role, activator of the mhpABCDFE operon coding for components of the 3-hydroxyphenylpropionate degradation pathway. In Escherichia coli (strain K12), this protein is DNA-binding transcriptional activator MhpR (mhpR).